A 307-amino-acid chain; its full sequence is Ribonuclease Z (307 aa).

Histidine 63, histidine 65, aspartate 67, histidine 68, histidine 141, aspartate 212, and histidine 270 together coordinate Zn(2+). Aspartate 67 (proton acceptor) is an active-site residue.

It belongs to the RNase Z family. In terms of assembly, homodimer. Requires Zn(2+) as cofactor.

It catalyses the reaction Endonucleolytic cleavage of RNA, removing extra 3' nucleotides from tRNA precursor, generating 3' termini of tRNAs. A 3'-hydroxy group is left at the tRNA terminus and a 5'-phosphoryl group is left at the trailer molecule.. Its function is as follows. Zinc phosphodiesterase, which displays some tRNA 3'-processing endonuclease activity. Probably involved in tRNA maturation, by removing a 3'-trailer from precursor tRNA. In Bacillus cereus (strain ATCC 10987 / NRS 248), this protein is Ribonuclease Z.